We begin with the raw amino-acid sequence, 296 residues long: tRNA dimethylallyltransferase (296 aa).

19 to 26 (GPTASGKS) is a binding site for ATP. 21–26 (TASGKS) serves as a coordination point for substrate.

It belongs to the IPP transferase family. Monomer. Requires Mg(2+) as cofactor.

The enzyme catalyses adenosine(37) in tRNA + dimethylallyl diphosphate = N(6)-dimethylallyladenosine(37) in tRNA + diphosphate. Its function is as follows. Catalyzes the transfer of a dimethylallyl group onto the adenine at position 37 in tRNAs that read codons beginning with uridine, leading to the formation of N6-(dimethylallyl)adenosine (i(6)A). This Dinoroseobacter shibae (strain DSM 16493 / NCIMB 14021 / DFL 12) protein is tRNA dimethylallyltransferase.